The sequence spans 569 residues: Isocitrate dehydrogenase kinase/phosphatase (569 aa).

Residues 316–322 and K337 contribute to the ATP site; that span reads APGVRGM. D372 is a catalytic residue.

The protein belongs to the AceK family.

The protein resides in the cytoplasm. It carries out the reaction L-seryl-[isocitrate dehydrogenase] + ATP = O-phospho-L-seryl-[isocitrate dehydrogenase] + ADP + H(+). In terms of biological role, bifunctional enzyme which can phosphorylate or dephosphorylate isocitrate dehydrogenase (IDH) on a specific serine residue. This is a regulatory mechanism which enables bacteria to bypass the Krebs cycle via the glyoxylate shunt in response to the source of carbon. When bacteria are grown on glucose, IDH is fully active and unphosphorylated, but when grown on acetate or ethanol, the activity of IDH declines drastically concomitant with its phosphorylation. The chain is Isocitrate dehydrogenase kinase/phosphatase from Pseudomonas putida (strain W619).